Reading from the N-terminus, the 200-residue chain is Probable molybdenum cofactor guanylyltransferase (200 aa).

GTP-binding positions include Leu9 to Gly11, Lys21, Asp69, and Asp100. Asp100 contributes to the Mg(2+) binding site.

It belongs to the MobA family. Requires Mg(2+) as cofactor.

It localises to the cytoplasm. The catalysed reaction is Mo-molybdopterin + GTP + H(+) = Mo-molybdopterin guanine dinucleotide + diphosphate. Transfers a GMP moiety from GTP to Mo-molybdopterin (Mo-MPT) cofactor (Moco or molybdenum cofactor) to form Mo-molybdopterin guanine dinucleotide (Mo-MGD) cofactor. In Bacillus cereus (strain AH820), this protein is Probable molybdenum cofactor guanylyltransferase.